Here is a 460-residue protein sequence, read N- to C-terminus: Argininosuccinate lyase (460 aa).

Belongs to the lyase 1 family. Argininosuccinate lyase subfamily.

It is found in the cytoplasm. The enzyme catalyses 2-(N(omega)-L-arginino)succinate = fumarate + L-arginine. It participates in amino-acid biosynthesis; L-arginine biosynthesis; L-arginine from L-ornithine and carbamoyl phosphate: step 3/3. The chain is Argininosuccinate lyase from Staphylococcus haemolyticus (strain JCSC1435).